Consider the following 213-residue polypeptide: ATP-dependent Clp protease proteolytic subunit (213 aa).

Ser-114 functions as the Nucleophile in the catalytic mechanism. His-139 is a catalytic residue.

This sequence belongs to the peptidase S14 family. In terms of assembly, fourteen ClpP subunits assemble into 2 heptameric rings which stack back to back to give a disk-like structure with a central cavity, resembling the structure of eukaryotic proteasomes.

It is found in the cytoplasm. The catalysed reaction is Hydrolysis of proteins to small peptides in the presence of ATP and magnesium. alpha-casein is the usual test substrate. In the absence of ATP, only oligopeptides shorter than five residues are hydrolyzed (such as succinyl-Leu-Tyr-|-NHMec, and Leu-Tyr-Leu-|-Tyr-Trp, in which cleavage of the -Tyr-|-Leu- and -Tyr-|-Trp bonds also occurs).. Cleaves peptides in various proteins in a process that requires ATP hydrolysis. Has a chymotrypsin-like activity. Plays a major role in the degradation of misfolded proteins. The sequence is that of ATP-dependent Clp protease proteolytic subunit from Pseudomonas putida (strain ATCC 47054 / DSM 6125 / CFBP 8728 / NCIMB 11950 / KT2440).